A 244-amino-acid polypeptide reads, in one-letter code: Venom nerve growth factor 2 (244 aa).

The first 18 residues, 1 to 18 (MSMLCYTLIIAFLIGIWA), serve as a signal peptide directing secretion. A propeptide spanning residues 19 to 125 (APKSEDNVPL…TLNRNIRAKR (107 aa)) is cleaved from the precursor. The segment covering 47–66 (GLKTSRNTDQRHPAPKKAED) has biased composition (basic and acidic residues). The disordered stretch occupies residues 47-69 (GLKTSRNTDQRHPAPKKAEDQEL). Disulfide bonds link cysteine 139–cysteine 205 and cysteine 181–cysteine 233.

This sequence belongs to the NGF-beta family. Homodimer; non-covalently linked. In terms of tissue distribution, expressed by the venom gland.

The protein resides in the secreted. Functionally, nerve growth factor is important for the development and maintenance of the sympathetic and sensory nervous systems. It stimulates division and differentiation of sympathetic and embryonic sensory neurons as well as basal forebrain cholinergic neurons in the brain. Its relevance in the snake venom is not clear. However, it has been shown to inhibit metalloproteinase-dependent proteolysis of platelet glycoprotein Ib alpha, suggesting a metalloproteinase inhibition to prevent metalloprotease autodigestion and/or protection against prey proteases. Binds a lipid between the two protein chains in the homodimer. The lipid-bound form promotes histamine relase from mouse mast cells, contrary to the lipid-free form. In Notechis scutatus scutatus (Mainland tiger snake), this protein is Venom nerve growth factor 2.